The primary structure comprises 872 residues: Probable GPI-anchored adhesin-like protein PGA25 (872 aa).

A signal peptide spans 1–19 (MKVTAVSSVLLTVAALTNA). Over residues 43–65 (PAAAPAAQPAAQPTTQSPADQPT) the composition is skewed to low complexity. 3 disordered regions span residues 43–383 (PAAA…TIIP), 492–517 (KPTGSGSITVLPTKSTTTDDDDDETD), and 623–809 (PDDW…ECDT). Residues 66-83 (VQSPVSSDQPSTAQPVAQ) show a composition bias toward polar residues. Composition is skewed to low complexity over residues 84-110 (NNLLLDSSNSTLVVPSSSKSSTTTRST) and 125-171 (SSEA…SSSS). Asn-92 carries an N-linked (GlcNAc...) asparagine glycan. The segment covering 196–207 (ETDDEDCVEETE) has biased composition (acidic residues). Low complexity-rich tracts occupy residues 208–225 (SPTSAPASAPTTSKVATT), 242–260 (SSAPISSAESSPTVASSTT), and 274–293 (SSVPSSSAETSTTVASNTTT). Asn-290 carries an N-linked (GlcNAc...) asparagine glycan. Residues 317 to 328 (AEEDDEECEDPT) show a composition bias toward acidic residues. Residues 349–363 (TSQSKTSVSSVVSKS) show a composition bias toward low complexity. Positions 366 to 376 (EDDDDETECET) are enriched in acidic residues. Residues 495–506 (GSGSITVLPTKS) show a composition bias toward polar residues. Acidic residues-rich tracts occupy residues 624–635 (DDWEDDGYEGED) and 646–659 (DDGEWEWYEEDDGE). 3 stretches are compositionally biased toward gly residues: residues 666 to 692 (SSSGSGTGSWWGSGAGSSGGTTSGSGS), 701 to 710 (SSGGTWGGSG), and 731 to 740 (SWWGGSGSGS). Over residues 741-760 (SSGSSSGVSSGDSGSSSVTG) the composition is skewed to low complexity. The span at 761 to 771 (GSSGSWWGGSG) shows a compositional bias: gly residues. Residues 780–808 (DGYDDEDDQTPEPECDDEDDSWDDDEECD) show a composition bias toward acidic residues. The GPI-anchor amidated alanine moiety is linked to residue Ala-845. A propeptide spans 846–872 (QSVTQIENIGGKVSASGLFVVLGLLLI) (removed in mature form).

This sequence belongs to the HYR1/IFF family. Post-translationally, the GPI-anchor is attached to the protein in the endoplasmic reticulum and serves to target the protein to the cell surface. There, the glucosamine-inositol phospholipid moiety is cleaved off and the GPI-modified mannoprotein is covalently attached via its lipidless GPI glycan remnant to the 1,6-beta-glucan of the outer cell wall layer.

The protein resides in the secreted. It is found in the cell wall. The protein localises to the membrane. In terms of biological role, probable GPI-anchored cell wall protein involved in cell wall organization, hyphal growth, as well as in host-fungal interaction and virulence. The protein is Probable GPI-anchored adhesin-like protein PGA25 (PGA25) of Candida albicans (strain SC5314 / ATCC MYA-2876) (Yeast).